Reading from the N-terminus, the 214-residue chain is ATP-dependent Clp protease proteolytic subunit 2 (214 aa).

Ser110 acts as the Nucleophile in catalysis. His135 is an active-site residue.

The protein belongs to the peptidase S14 family. In terms of assembly, fourteen ClpP subunits assemble into 2 heptameric rings which stack back to back to give a disk-like structure with a central cavity, resembling the structure of eukaryotic proteasomes.

Its subcellular location is the cytoplasm. It carries out the reaction Hydrolysis of proteins to small peptides in the presence of ATP and magnesium. alpha-casein is the usual test substrate. In the absence of ATP, only oligopeptides shorter than five residues are hydrolyzed (such as succinyl-Leu-Tyr-|-NHMec, and Leu-Tyr-Leu-|-Tyr-Trp, in which cleavage of the -Tyr-|-Leu- and -Tyr-|-Trp bonds also occurs).. Its function is as follows. Cleaves peptides in various proteins in a process that requires ATP hydrolysis. Has a chymotrypsin-like activity. Plays a major role in the degradation of misfolded proteins. This is ATP-dependent Clp protease proteolytic subunit 2 from Mycobacterium bovis (strain ATCC BAA-935 / AF2122/97).